An 890-amino-acid chain; its full sequence is Alanine--tRNA ligase (890 aa).

Positions 573, 577, 676, and 680 each coordinate Zn(2+).

It belongs to the class-II aminoacyl-tRNA synthetase family. Zn(2+) is required as a cofactor.

The protein resides in the cytoplasm. The catalysed reaction is tRNA(Ala) + L-alanine + ATP = L-alanyl-tRNA(Ala) + AMP + diphosphate. Its function is as follows. Catalyzes the attachment of alanine to tRNA(Ala) in a two-step reaction: alanine is first activated by ATP to form Ala-AMP and then transferred to the acceptor end of tRNA(Ala). Also edits incorrectly charged Ser-tRNA(Ala) and Gly-tRNA(Ala) via its editing domain. This chain is Alanine--tRNA ligase, found in Corynebacterium efficiens (strain DSM 44549 / YS-314 / AJ 12310 / JCM 11189 / NBRC 100395).